The primary structure comprises 879 residues: Oxysterol-binding protein-related protein 5 (879 aa).

Positions 1 to 73 are disordered; it reads MKEEAFLRRR…TPSSATKVPP (73 aa). Ser-12 is subject to Phosphoserine. Residues 93 to 123 adopt a coiled-coil conformation; the sequence is VTKKETLKAQKENYRQEKKRATRQLLSALTD. One can recognise a PH domain in the interval 126 to 243; sequence VVIMADSLKI…WLDALELALR (118 aa). Residues 254 to 341 are disordered; the sequence is KPGRDGEPGT…TPGAPVRRGT (88 aa). 2 stretches are compositionally biased toward basic and acidic residues: residues 300–309 and 316–325; these read FSDKSERENP and TQDHSRKTES. A 1,2-diacyl-sn-glycero-3-phospho-(1D-myo-inositol 4-phosphate) is bound by residues 384–389, 446–449, and 478–479; these read LSRVVL, KPYN, and HH. Residues 384-389 and Asn-449 each bind a 1,2-diacyl-sn-glycero-3-phospho-L-serine; that span reads LSRVVL. Position 504 (Ser-504) interacts with a 1,2-diacyl-sn-glycero-3-phospho-L-serine. Residues Lys-670, Glu-674, and Arg-678 each coordinate a 1,2-diacyl-sn-glycero-3-phospho-(1D-myo-inositol 4-phosphate). The disordered stretch occupies residues 742-806; the sequence is TTFLGSPGPR…FVPGGESPCP (65 aa). The residue at position 747 (Ser-747) is a Phosphoserine. Basic and acidic residues predominate over residues 750–765; that stretch reads PRHERSGPDQRLRKAS. Positions 766 to 783 are enriched in polar residues; the sequence is DQPSGHSQATESSGSTPE. The helical transmembrane segment at 860 to 878 threads the bilayer; sequence SWFLLCVFLACQLFINHIL.

It belongs to the OSBP family. In terms of tissue distribution, ubiquitously expressed.

The protein localises to the endoplasmic reticulum membrane. Its function is as follows. Lipid transporter involved in lipid countertransport between the endoplasmic reticulum and the plasma membrane: specifically exchanges phosphatidylserine with phosphatidylinositol 4-phosphate (PI4P), delivering phosphatidylserine to the plasma membrane in exchange for PI4P, which is degraded by the SAC1/SACM1L phosphatase in the endoplasmic reticulum. Binds phosphatidylserine and PI4P in a mutually exclusive manner. May cooperate with NPC1 to mediate the exit of cholesterol from endosomes/lysosomes. Binds 25-hydroxycholesterol and cholesterol. This is Oxysterol-binding protein-related protein 5 (OSBPL5) from Homo sapiens (Human).